A 183-amino-acid polypeptide reads, in one-letter code: Beta-defensin 129 (183 aa).

The first 19 residues, 1–19 (MKLLFPIFASLMLQYQVNT), serve as a signal peptide directing secretion. Disulfide bonds link Cys27–Cys53, Cys34–Cys48, and Cys38–Cys54. The segment at 141–183 (TATSTKSNTKESRDSATASSPPAPPPPNILPTPSLELEEAEEQ) is disordered. Residues 161-170 (PPAPPPPNIL) are compositionally biased toward pro residues.

This sequence belongs to the beta-defensin family.

It is found in the secreted. Functionally, has antibacterial activity. The protein is Beta-defensin 129 (DEFB129) of Gorilla gorilla gorilla (Western lowland gorilla).